Consider the following 94-residue polypeptide: Large ribosomal subunit protein uL23 (94 aa).

The protein belongs to the universal ribosomal protein uL23 family. Part of the 50S ribosomal subunit. Contacts protein L29, and trigger factor when it is bound to the ribosome.

In terms of biological role, one of the early assembly proteins it binds 23S rRNA. One of the proteins that surrounds the polypeptide exit tunnel on the outside of the ribosome. Forms the main docking site for trigger factor binding to the ribosome. This Pelobacter propionicus (strain DSM 2379 / NBRC 103807 / OttBd1) protein is Large ribosomal subunit protein uL23.